Here is a 995-residue protein sequence, read N- to C-terminus: S1 RNA-binding domain-containing protein 1 (995 aa).

Positions Ser23–Val81 are disordered. Glycyl lysine isopeptide (Lys-Gly) (interchain with G-Cter in SUMO2) cross-links involve residues Lys84 and Lys134. Positions Cys120–Cys165 are disordered. Low complexity predominate over residues Glu146–Thr159. Residues Lys166, Lys167, and Lys183 each participate in a glycyl lysine isopeptide (Lys-Gly) (interchain with G-Cter in SUMO2) cross-link. Lys185 is covalently cross-linked (Glycyl lysine isopeptide (Lys-Gly) (interchain with G-Cter in SUMO1); alternate). Lys185 is covalently cross-linked (Glycyl lysine isopeptide (Lys-Gly) (interchain with G-Cter in SUMO2); alternate). A coiled-coil region spans residues Ala258–Glu288. Ser861 carries the phosphoserine modification. In terms of domain architecture, S1 motif spans Gly919–Ile992. Lys955 participates in a covalent cross-link: Glycyl lysine isopeptide (Lys-Gly) (interchain with G-Cter in SUMO2). A Phosphoserine modification is found at Ser964.

In Homo sapiens (Human), this protein is S1 RNA-binding domain-containing protein 1 (SRBD1).